A 267-amino-acid chain; its full sequence is Diphthine--ammonia ligase (267 aa).

Phosphotyrosine is present on Tyr-97.

It belongs to the Diphthine--ammonia ligase family.

The enzyme catalyses diphthine-[translation elongation factor 2] + NH4(+) + ATP = diphthamide-[translation elongation factor 2] + AMP + diphosphate + H(+). It functions in the pathway protein modification; peptidyl-diphthamide biosynthesis. In terms of biological role, amidase that catalyzes the last step of diphthamide biosynthesis using ammonium and ATP. Diphthamide biosynthesis consists in the conversion of an L-histidine residue in the translation elongation factor eEF-2 (EEF2) to diphthamide. In Rattus norvegicus (Rat), this protein is Diphthine--ammonia ligase (Dph6).